The sequence spans 230 residues: Acetyltransferase (230 aa).

The N-acetyltransferase domain occupies 143-230; the sequence is RYLDGKVICD…RVAVYKARQT (88 aa).

It participates in mycotoxin biosynthesis. Functionally, acetyltransferase; part of the satratoxin SC3 cluster involved in the biosynthesis of satratoxins, trichothecene mycotoxins that are associated with human food poisonings. Satratoxins are suggested to be made by products of multiple gene clusters (SC1, SC2 and SC3) that encode 21 proteins in all, including polyketide synthases, acetyltransferases, and other enzymes expected to modify the trichothecene skeleton. SC1 encodes 10 proteins, SAT1 to SAT10. The largest are SAT8, which encodes a putative polyketide synthase (PKS) with a conventional non-reducing architecture, and SAT10, a putative protein containing four ankyrin repeats and thus may be involved in protein scaffolding. The putative short-chain reductase SAT3 may assist the PKS in some capacity. SAT6 contains a secretory lipase domain and acts probably as a trichothecene esterase. SAT5 encodes a putative acetyltransferase, and so, with SAT6, may affect endogenous protection from toxicity. The probable transcription factor SAT9 may regulate the expression of the SC1 cluster. SC2 encodes proteins SAT11 to SAT16, the largest of which encodes the putative reducing PKS SAT13. SAT11 is a cytochrome P450 monooxygenase, while SAT14 and SAT16 are probable acetyltransferases. The SC2 cluster may be regulated by the transcription factor SAT15. SC3 is a small cluster that encodes 5 proteins, SAT17 to SAT21. SAT21 is a putative MFS-type transporter which may have a role in exporting secondary metabolites. The four other proteins putatively encoded in SC3 include the taurine hydroxylase-like protein SAT17, the O-methyltransferase SAT18, the acetyltransferase SAT19, and the Cys6-type zinc finger SAT20, the latter being probably involved in regulation of SC3 expression. The chain is Acetyltransferase from Stachybotrys chartarum (strain CBS 109288 / IBT 7711) (Toxic black mold).